The chain runs to 955 residues: Coiled-coil domain-containing protein 146 (955 aa).

Over residues 1 to 17 (MEDSSTDTEKEEEEEKD) the composition is skewed to acidic residues. The tract at residues 1–22 (MEDSSTDTEKEEEEEKDEKDQE) is disordered. Coiled coils occupy residues 114–141 (EAFS…KERE), 169–321 (GEME…AREN), 400–461 (STLS…LLRM), 534–640 (KAHQ…RNES), and 667–832 (NGEI…MKQA).

As to quaternary structure, interacts with CCDC38 and CCDC42. Interacts with intraflagellar transport proteins IFT20 and IFT88. In terms of assembly, (Microbial infection) Interacts with Chlamydia trachomatis incM/YT288. In host cells infected with C.trachomatis incM, CCDC146 is recruited to the periphery of the pathogen-containing vacuole but recruitment is not dependent on incM. Widely expressed.

It is found in the cytoplasm. The protein resides in the cytoskeleton. It localises to the microtubule organizing center. The protein localises to the centrosome. Its subcellular location is the centriole. It is found in the flagellum axoneme. The protein resides in the cilium basal body. It localises to the midbody. Its function is as follows. Essential for sperm flagellum biogenesis and male fertility. The protein is Coiled-coil domain-containing protein 146 (CCDC146) of Homo sapiens (Human).